We begin with the raw amino-acid sequence, 753 residues long: MTFSFTATVLGSPRIGPNRELKKAVESYWAGRLDAEGLDALARDLRRRTWTSLRDAGLDSVPVNTFSYYDHVLDTAAMLGALPDRVAGIESDLDRYFAAARGNDTVAPLEMTRWFDTNYHYLVPEISPTTTFALDPSKVLRELEEARALDIPARPVVVGPVTFLLLSKAVGSDAPLLDRLDELVPLYADLLGRLAGAGADWVQIDEPALVADRNPKEIAAAKRAYDRLSGLELRPAILVASYFGSLGDALPAIASTGVEGIAIDLVAGSDTLATVPDLTRKHVVAGVVDGRNIWRTDLDAALASLGTLLGSTGSLAVSTSCSLLHVPYTLDAETGIDKALRSWLAFGTEKVREVVTLGTALTSGRESVDDEFALARAAASTRNTDRRLHDATVRARLDALTASDPGRSPAAERREAQSALSLPVLPTTTIGSYPQTTQIRVARAARRKGEIDEAEYLKRMRAEVADVVALQEKLDLDVLVHGEPERNDMVQYFAEQLDGFFATDNGWVQSYGSRCVRPPILYGDVRRSNPMTVEWITYAQSLTQRPVKGMLTGPVTILAWSFVRDDQPLADSANQVALAIRDETVDLQGAGIRIVQVDEPALRELLPLRAADQPGYLDWSVGAFRLATSGVSDSTQIHTHLCYSEFGEVIEAIARLDADVTSIEAARSHMEVLDDLSAVGFDLGVGPGVYDIHSPRVPGVEEIAASLREALKAVPVERLWVNPDCGLKTRGPAEVEASLRNLVDAAKLVRAEL.

5-methyltetrahydropteroyltri-L-glutamate contacts are provided by residues 19–22 (RELK) and R113. Residues 430-432 (IGS) and E483 each bind L-homocysteine. Residues 430-432 (IGS) and E483 each bind L-methionine. Residues 514–515 (RC) and W560 each bind 5-methyltetrahydropteroyltri-L-glutamate. Residue D598 coordinates L-homocysteine. D598 provides a ligand contact to L-methionine. Position 604 (E604) interacts with 5-methyltetrahydropteroyltri-L-glutamate. Zn(2+) is bound by residues H640, C642, and E664. H693 serves as the catalytic Proton donor. C725 is a Zn(2+) binding site.

It belongs to the vitamin-B12 independent methionine synthase family. Zn(2+) serves as cofactor.

It catalyses the reaction 5-methyltetrahydropteroyltri-L-glutamate + L-homocysteine = tetrahydropteroyltri-L-glutamate + L-methionine. It functions in the pathway amino-acid biosynthesis; L-methionine biosynthesis via de novo pathway; L-methionine from L-homocysteine (MetE route): step 1/1. Its function is as follows. Catalyzes the transfer of a methyl group from 5-methyltetrahydrofolate to homocysteine resulting in methionine formation. The polypeptide is 5-methyltetrahydropteroyltriglutamate--homocysteine methyltransferase (Rhodococcus jostii (strain RHA1)).